We begin with the raw amino-acid sequence, 235 residues long: V-type proton ATPase subunit E2 (235 aa).

The residue at position 1 (Met1) is an N-acetylmethionine. The stretch at 8 to 64 forms a coiled coil; the sequence is KQIQQMVRFIRQEAEEKANEISISAEEEFNIERLQLLESAKRKLRQDYDRKLKQVDI.

Belongs to the V-ATPase E subunit family. As to quaternary structure, V-ATPase is a heteromultimeric enzyme composed of a peripheral catalytic V1 complex (components A to H) attached to an integral membrane V0 proton pore complex (components: a, c, c'', d and e).

Its subcellular location is the vacuole membrane. Subunit of the peripheral V1 complex of vacuolar ATPase essential for assembly or catalytic function. V-ATPase is responsible for acidifying a variety of intracellular compartments in eukaryotic cells. The chain is V-type proton ATPase subunit E2 (VHA-E2) from Arabidopsis thaliana (Mouse-ear cress).